We begin with the raw amino-acid sequence, 320 residues long: Transaldolase (320 aa).

Catalysis depends on Lys-126, which acts as the Schiff-base intermediate with substrate.

Belongs to the transaldolase family. Type 1 subfamily. In terms of assembly, homodimer.

It is found in the cytoplasm. It carries out the reaction D-sedoheptulose 7-phosphate + D-glyceraldehyde 3-phosphate = D-erythrose 4-phosphate + beta-D-fructose 6-phosphate. It participates in carbohydrate degradation; pentose phosphate pathway; D-glyceraldehyde 3-phosphate and beta-D-fructose 6-phosphate from D-ribose 5-phosphate and D-xylulose 5-phosphate (non-oxidative stage): step 2/3. Its function is as follows. Transaldolase is important for the balance of metabolites in the pentose-phosphate pathway. This chain is Transaldolase, found in Bordetella bronchiseptica (strain ATCC BAA-588 / NCTC 13252 / RB50) (Alcaligenes bronchisepticus).